The chain runs to 427 residues: MFFTCGPNEAMVVSGFCRSPPVMVAGGRVFVLPCIQQIQRISLNTLTLNVKSEKVYTRHGVPISVTGIAQVKIQGQNKEMLAAACQMFLGKTEAEIAHIALETLEGHQRAIMAHMTVEEIYKDRQKFSEQVFKVASSDLVNMGISVVSYTLKDIHDDQDYLHSLGKARTAQVQKDARIGEAEAKRDAGIREAKAKQEKVSAQYLSEIEMAKAQRDYELKKAAYDIEVNTRRAQADLAYQLQVAKTKQQIEEQRVQVQVVERAQQVAVQEQEIARREKELEARVRKPAEAERYKLERLAEAEKSQLIMQAEAEAASVRMRGEAEAFAIGARARAEAEQMAKKAEAFQLYQEAAQLDMLLEKLPQVAEEISGPLTSANKITLVSSGSGTMGAAKVTGEVLDILTRLPESVERLTGVSISQVNHKPLRTA.

S19, S163, and S385 each carry phosphoserine. A Phosphothreonine modification is found at T387.

Belongs to the band 7/mec-2 family. Flotillin subfamily. Heterooligomeric complex of flotillin-1 and flotillin-2 and caveolin-1 and caveolin-2. Interacts with ECPAS.

The protein resides in the cell membrane. The protein localises to the endosome. It is found in the membrane. It localises to the caveola. Its subcellular location is the melanosome. The protein resides in the membrane raft. May act as a scaffolding protein within caveolar membranes, functionally participating in formation of caveolae or caveolae-like vesicles. In Homo sapiens (Human), this protein is Flotillin-1 (FLOT1).